Reading from the N-terminus, the 80-residue chain is Pancreatic polypeptide (80 aa).

An N-terminal signal peptide occupies residues 1–25 (MPPRWASLLLLACSLLLLAVPPGTA). At tyrosine 61 the chain carries Tyrosine amide. A propeptide spanning residues 65–80 (SSSRVLCEEPMGAAGC) is cleaved from the precursor.

This sequence belongs to the NPY family.

Its subcellular location is the secreted. Functionally, hormone secreted by pancreatic cells that acts as a regulator of pancreatic and gastrointestinal functions. The chain is Pancreatic polypeptide (PPY) from Gallus gallus (Chicken).